Here is a 678-residue protein sequence, read N- to C-terminus: Vacuolar fusion protein mon1 (678 aa).

3 disordered regions span residues 1-116 (MDRD…YTSP), 449-474 (EENN…VTSP), and 568-591 (FETS…KTTE). Over residues 10–20 (NDGTNDNNDTT) the composition is skewed to low complexity. Residues 63–77 (RPTTQVSTIDISTLS) are compositionally biased toward polar residues. The span at 87–105 (STSATSATSATSATRSVAS) shows a compositional bias: low complexity. The segment covering 106 to 116 (PQSSASGYTSP) has biased composition (polar residues). Positions 450 to 459 (ENNSNNTNNP) are enriched in low complexity. Positions 460 to 471 (EQPPQPPPPKPV) are enriched in pro residues.

The protein belongs to the MON1/SAND family.

The protein localises to the endosome. The protein resides in the multivesicular body membrane. It localises to the prevacuolar compartment membrane. Its subcellular location is the vacuole membrane. Its function is as follows. In complex with CCZ1, is required for multiple vacuole delivery pathways including the cytoplasm to vacuole transport (Cvt), autophagy, pexophagy and endocytosis. The MON1-CCZ1 complex acts at the fusion of vesicles with the vacuole, through its regulation of the SNARE complex during the coordinated priming and docking stages of fusion, and particularly at the stage of tethering/docking. The protein is Vacuolar fusion protein mon1 (apg-13) of Neurospora crassa (strain ATCC 24698 / 74-OR23-1A / CBS 708.71 / DSM 1257 / FGSC 987).